Consider the following 132-residue polypeptide: Large ribosomal subunit protein bL12 (132 aa).

The protein belongs to the bacterial ribosomal protein bL12 family. Homodimer. Part of the ribosomal stalk of the 50S ribosomal subunit. Forms a multimeric L10(L12)X complex, where L10 forms an elongated spine to which 2 to 4 L12 dimers bind in a sequential fashion. Binds GTP-bound translation factors.

Functionally, forms part of the ribosomal stalk which helps the ribosome interact with GTP-bound translation factors. Is thus essential for accurate translation. In Ehrlichia canis (strain Jake), this protein is Large ribosomal subunit protein bL12.